The chain runs to 68 residues: uncharacterized protein (68 aa).

This sequence to B.subtilis XtrA.

This is an uncharacterized protein from Bacillus subtilis (strain 168).